A 1102-amino-acid polypeptide reads, in one-letter code: Phosphatidylinositol 4,5-bisphosphate 3-kinase catalytic subunit gamma isoform (1102 aa).

The region spanning S34–H141 is the PI3K-ABD domain. A PI3K-RBD domain is found at N217–T309. The C2 PI3K-type domain maps to C357 to D521. A PIK helical domain is found at D541 to G723. In terms of domain architecture, PI3K/PI4K catalytic spans A797–W1080. Positions V803–K809 are G-loop. ATP-binding positions include G829–L838 and L864–T872. The catalytic loop stretch occupies residues G943 to N951. ATP is bound at residue F961–L969. Residues H962–T988 are activation loop. Phosphothreonine; by PKA is present on T1024. A Phosphoserine; by autocatalysis modification is found at S1101.

It belongs to the PI3/PI4-kinase family. Heterodimer of a catalytic subunit PIK3CG and a PIK3R5 or PIK3R6 regulatory subunit. Interacts with GRK2 through the PIK helical domain. Interaction with GRK2 is required for targeting to agonist-occupied receptor. Interacts with PDE3B; regulates PDE3B activity and thereby cAMP levels in cells. Interacts with TPM2. Interacts with EPHA8; regulates integrin-mediated cell adhesion to substrate. Interacts with HRAS; the interaction is required for membrane recruitment and beta-gamma G protein dimer-dependent activation of the PI3K gamma complex PIK3CG:PIK3R6. Autophosphorylation at Ser-1101 has no effect on the phosphatidylinositol-4,5-bisphosphate 3-kinase activity. In terms of tissue distribution, pancreas, skeletal muscle, liver and heart.

The protein resides in the cytoplasm. It is found in the cell membrane. The catalysed reaction is a 1,2-diacyl-sn-glycero-3-phospho-(1D-myo-inositol) + ATP = a 1,2-diacyl-sn-glycero-3-phospho-(1D-myo-inositol-3-phosphate) + ADP + H(+). It carries out the reaction a 1,2-diacyl-sn-glycero-3-phospho-(1D-myo-inositol-4,5-bisphosphate) + ATP = a 1,2-diacyl-sn-glycero-3-phospho-(1D-myo-inositol-3,4,5-trisphosphate) + ADP + H(+). It catalyses the reaction a 1,2-diacyl-sn-glycero-3-phospho-(1D-myo-inositol 4-phosphate) + ATP = a 1,2-diacyl-sn-glycero-3-phospho-(1D-myo-inositol-3,4-bisphosphate) + ADP + H(+). The enzyme catalyses L-seryl-[protein] + ATP = O-phospho-L-seryl-[protein] + ADP + H(+). Its pathway is phospholipid metabolism; phosphatidylinositol phosphate biosynthesis. Its activity is regulated as follows. Activated by both the alpha and the beta-gamma G proteins following stimulation of G protein-coupled receptors (GPCRs). Activation by GPCRs is assisted by the regulatory subunits (PIK3R5 or PIK3R6) leading to the translocation from the cytosol to the plasma membrane and to kinase activation. Inhibited by AS-604850 and AS-605240. Its function is as follows. Phosphoinositide-3-kinase (PI3K) that phosphorylates PtdIns(4,5)P2 (Phosphatidylinositol 4,5-bisphosphate) to generate phosphatidylinositol 3,4,5-trisphosphate (PIP3). PIP3 plays a key role by recruiting PH domain-containing proteins to the membrane, including AKT1 and PDPK1, activating signaling cascades involved in cell growth, survival, proliferation, motility and morphology. Links G-protein coupled receptor activation to PIP3 production. Involved in immune, inflammatory and allergic responses. Modulates leukocyte chemotaxis to inflammatory sites and in response to chemoattractant agents. May control leukocyte polarization and migration by regulating the spatial accumulation of PIP3 and by regulating the organization of F-actin formation and integrin-based adhesion at the leading edge. Controls motility of dendritic cells. Together with PIK3CD is involved in natural killer (NK) cell development and migration towards the sites of inflammation. Participates in T-lymphocyte migration. Regulates T-lymphocyte proliferation, activation, and cytokine production. Together with PIK3CD participates in T-lymphocyte development. Required for B-lymphocyte development and signaling. Together with PIK3CD participates in neutrophil respiratory burst. Together with PIK3CD is involved in neutrophil chemotaxis and extravasation. Together with PIK3CB promotes platelet aggregation and thrombosis. Regulates alpha-IIb/beta-3 integrins (ITGA2B/ ITGB3) adhesive function in platelets downstream of P2Y12 through a lipid kinase activity-independent mechanism. May have also a lipid kinase activity-dependent function in platelet aggregation. Involved in endothelial progenitor cell migration. Negative regulator of cardiac contractility. Modulates cardiac contractility by anchoring protein kinase A (PKA) and PDE3B activation, reducing cAMP levels. Regulates cardiac contractility also by promoting beta-adrenergic receptor internalization by binding to GRK2 and by non-muscle tropomyosin phosphorylation. Also has serine/threonine protein kinase activity: both lipid and protein kinase activities are required for beta-adrenergic receptor endocytosis. May also have a scaffolding role in modulating cardiac contractility. Contributes to cardiac hypertrophy under pathological stress. Through simultaneous binding of PDE3B to RAPGEF3 and PIK3R6 is assembled in a signaling complex in which the PI3K gamma complex is activated by RAPGEF3 and which is involved in angiogenesis. In neutrophils, participates in a phospholipase C-activating N-formyl peptide-activated GPCR (G protein-coupled receptor) signaling pathway downstream of RASGRP4-mediated Ras-activation, to promote neutrophil functional responses. In Homo sapiens (Human), this protein is Phosphatidylinositol 4,5-bisphosphate 3-kinase catalytic subunit gamma isoform (PIK3CG).